An 85-amino-acid chain; its full sequence is Large ribosomal subunit protein bL27 (85 aa).

Positions 1–20 (MAHKKAGGSTRNGRDSESKR) are disordered.

This sequence belongs to the bacterial ribosomal protein bL27 family.

The protein is Large ribosomal subunit protein bL27 of Azotobacter vinelandii (strain DJ / ATCC BAA-1303).